A 512-amino-acid chain; its full sequence is Histidine ammonia-lyase (512 aa).

Positions 143–145 (ASG) form a cross-link, 5-imidazolinone (Ala-Gly). Ser144 bears the 2,3-didehydroalanine (Ser) mark.

Belongs to the PAL/histidase family. In terms of processing, contains an active site 4-methylidene-imidazol-5-one (MIO), which is formed autocatalytically by cyclization and dehydration of residues Ala-Ser-Gly.

It is found in the cytoplasm. The enzyme catalyses L-histidine = trans-urocanate + NH4(+). It participates in amino-acid degradation; L-histidine degradation into L-glutamate; N-formimidoyl-L-glutamate from L-histidine: step 1/3. The chain is Histidine ammonia-lyase from Ruegeria pomeroyi (strain ATCC 700808 / DSM 15171 / DSS-3) (Silicibacter pomeroyi).